Reading from the N-terminus, the 130-residue chain is Protein ApaG (130 aa).

The region spanning 3–127 (RAVTRQIEVL…FSLDSPDIRR (125 aa)) is the ApaG domain.

This is Protein ApaG from Afipia carboxidovorans (strain ATCC 49405 / DSM 1227 / KCTC 32145 / OM5) (Oligotropha carboxidovorans).